Consider the following 270-residue polypeptide: Phospholysine phosphohistidine inorganic pyrophosphate phosphatase (270 aa).

Positions 17 and 19 each coordinate Mg(2+). Substrate contacts are provided by residues 17–19 (DIS), 54–55 (TN), and Lys-189. Asp-214 lines the Mg(2+) pocket.

It belongs to the HAD-like hydrolase superfamily. As to quaternary structure, homodimer. The cofactor is Mg(2+). Detected in liver (at protein level).

The protein localises to the cytoplasm. It localises to the nucleus. It carries out the reaction diphosphate + H2O = 2 phosphate + H(+). Phosphatase that hydrolyzes imidodiphosphate, 3-phosphohistidine and 6-phospholysine. Has broad substrate specificity and can also hydrolyze inorganic diphosphate, but with lower efficiency. The polypeptide is Phospholysine phosphohistidine inorganic pyrophosphate phosphatase (LHPP) (Bos taurus (Bovine)).